The following is a 98-amino-acid chain: Defensin-A1 (98 aa).

The first 19 residues, 1–19 (MQTLSFLLALLFLVAQTPA), serve as a signal peptide directing secretion. Residues 20–62 (QPTGEGEKGGTIQEPEATEAQDTAAVLMAAGAADGDDSDTKQL) constitute a propeptide that is removed on maturation. Disulfide bonds link C67–C94, C69–C83, and C73–C93. Residues 97–98 (IK) constitute a propeptide that is removed on maturation.

Belongs to the alpha-defensin family. In terms of tissue distribution, highly expressed in intestine, and expressed at lower levels in lung and spleen.

The protein localises to the secreted. Functionally, has antimicrobial activity. In Ornithorhynchus anatinus (Duckbill platypus), this protein is Defensin-A1.